The chain runs to 589 residues: Complement component C8 beta chain (589 aa).

The N-terminal stretch at 1 to 31 (MKTGAQVWRALAKSCLLCAALGCLHLPGARG) is a signal peptide. A propeptide spanning residues 32-53 (EKPDFFETNAVNGSLVRSRPVR) is cleaved from the precursor. Asn43 carries an N-linked (GlcNAc...) asparagine glycan. The TSP type-1 1 domain occupies 63–116 (DCQLSTWSSWTACDPCQKKRYRHTYLLRPSQFYGELCDFSDKEVEDCVTNRACR). 7 cysteine pairs are disulfide-bonded: Cys64–Cys99, Cys75–Cys109, Cys78–Cys115, Cys121–Cys132, Cys126–Cys145, Cys139–Cys154, and Cys161–Cys199. Trp69 and Trp72 each carry a C-linked (Man) tryptophan glycan. The LDL-receptor class A domain maps to 120–155 (RCEGFVCAQTGRCVNRRLLCNGDNDCGDQSDEANCR). Ca(2+)-binding residues include Leu137, Asn140, Asp142, Asp144, Asp150, and Glu151. In terms of domain architecture, MACPF spans 157-503 (IYKKCSQDME…EFQMEVSSCR (347 aa)). Asn242 carries an N-linked (GlcNAc...) asparagine glycan. 4 beta stranded membrane passes run 251–258 (SSFKFGFK), 261–268 (GLVEFGVR), 378–385 (AGGGFQIG), and 391–398 (VYLKLGVS). Cys377 and Cys402 are joined by a disulfide. The residue at position 417 (Thr417) is a Phosphothreonine. Disulfide bonds link Cys502/Cys549, Cys504/Cys520, Cys507/Cys522, and Cys524/Cys533. One can recognise an EGF-like domain in the interval 504 to 534 (CAPCRNNGVPILKESRCECICPAGFQGVACE). Positions 544–587 (DGKWSCWSDWSPCSGGRKTRQRQCNNPAPQRGGSPCSGPASETL) constitute a TSP type-1 2 domain. 2 C-linked (Man) tryptophan glycosylation sites follow: Trp550 and Trp553. Cysteines 556 and 589 form a disulfide. The tract at residues 556 to 589 (CSGGRKTRQRQCNNPAPQRGGSPCSGPASETLDC) is disordered.

The protein belongs to the complement C6/C7/C8/C9 family. As to quaternary structure, heterotrimer of 3 chains: alpha (C8A), beta (C8B) and gamma (C8G); the alpha and gamma chains are disulfide bonded. Component of the membrane attack complex (MAC), composed of complement C5b, C6, C7, C8A, C8B, C8G and multiple copies of the pore-forming subunit C9. N-glycosylated; contains one or two bound glycans. Not O-glycosylated.

The protein localises to the secreted. Its subcellular location is the target cell membrane. Its activity is regulated as follows. Membrane attack complex (MAC) assembly is inhibited by CD59, thereby protecting self-cells from damage during complement activation. CD59 acts by binding to the beta-haipins of C8 (C8A and C8B), forming an intermolecular beta-sheet that prevents incorporation of the multiple copies of C9 required for complete formation of the osmolytic pore. MAC assembly is also inhibited by clusterin (CLU) chaperones that inhibit polymerization of C9. In terms of biological role, component of the membrane attack complex (MAC), a multiprotein complex activated by the complement cascade, which inserts into a target cell membrane and forms a pore, leading to target cell membrane rupture and cell lysis. The MAC is initiated by proteolytic cleavage of C5 into complement C5b in response to the classical, alternative, lectin and GZMK complement pathways. The complement pathways consist in a cascade of proteins that leads to phagocytosis and breakdown of pathogens and signaling that strengthens the adaptive immune system. C8B, together with C8A and C8G, inserts into the target membrane, but does not form pores by itself. During MAC assembly, associates with C5b, C6 and C7 to form the C5b8 intermediate complex that inserts into the target membrane and traverses the bilayer increasing membrane rigidity. This is Complement component C8 beta chain (C8b) from Rattus norvegicus (Rat).